The following is a 457-amino-acid chain: Multidrug resistance protein MdtK (457 aa).

12 consecutive transmembrane segments (helical) span residues 11–31, 53–73, 93–113, 127–147, 160–180, 188–208, 243–263, 276–296, 314–334, 350–370, 387–407, and 418–438; these read LLAL…MGFV, IWLP…PVIA, WLAG…GYII, AVGY…FQVA, GMVM…IFIY, LGGI…FIAM, LPIA…ALLV, IALN…AAVT, AART…IFTV, VVAL…SDSI, IFFI…YILA, and PAGF…LMML.

It belongs to the multi antimicrobial extrusion (MATE) (TC 2.A.66.1) family. MdtK subfamily.

The protein resides in the cell inner membrane. Its function is as follows. Multidrug efflux pump that functions probably as a Na(+)/drug antiporter. The sequence is that of Multidrug resistance protein MdtK from Salmonella agona (strain SL483).